Here is a 314-residue protein sequence, read N- to C-terminus: tRNA dimethylallyltransferase (314 aa).

12 to 19 (GPTASGKT) contacts ATP. 14–19 (TASGKT) serves as a coordination point for substrate. Interaction with substrate tRNA regions lie at residues 37 to 40 (DSAL) and 162 to 166 (QRIIR).

The protein belongs to the IPP transferase family. As to quaternary structure, monomer. Mg(2+) serves as cofactor.

It catalyses the reaction adenosine(37) in tRNA + dimethylallyl diphosphate = N(6)-dimethylallyladenosine(37) in tRNA + diphosphate. Catalyzes the transfer of a dimethylallyl group onto the adenine at position 37 in tRNAs that read codons beginning with uridine, leading to the formation of N6-(dimethylallyl)adenosine (i(6)A). This chain is tRNA dimethylallyltransferase, found in Acinetobacter baumannii (strain AB0057).